The chain runs to 483 residues: Probable ATP-dependent RNA helicase DDX6 (483 aa).

2 disordered regions span residues 1–39 and 55–75; these read MSTA…TQTQ and TQQQ…WKKT. Residues 55 to 66 are compositionally biased toward polar residues; it reads TQQQAQSMTTTI. Residues 96–124 carry the Q motif motif; that stretch reads NEFEDYCLKRELLMGIFEMGWEKPSPIQE. Residues 127-298 enclose the Helicase ATP-binding domain; sequence IPIALSGRDI…NSHLQKPYEI (172 aa). Residue 140–147 participates in ATP binding; it reads AKNGTGKS. The DEAD box motif lies at 246–249; sequence DEAD. One can recognise a Helicase C-terminal domain in the interval 308–468; that stretch reads GVTQYYAYVT…PIPSNIDKSL (161 aa).

Belongs to the DEAD box helicase family. DDX6/DHH1 subfamily.

The protein resides in the cytoplasm. The protein localises to the P-body. It is found in the nucleus. It carries out the reaction ATP + H2O = ADP + phosphate + H(+). In terms of biological role, essential for the formation of P-bodies, cytosolic membrane-less ribonucleoprotein granules involved in RNA metabolism through the coordinated storage of mRNAs encoding regulatory functions. Plays a role in P-bodies to coordinate the storage of translationally inactive mRNAs in the cytoplasm and prevent their degradation. This is Probable ATP-dependent RNA helicase DDX6 (DDX6) from Gallus gallus (Chicken).